A 252-amino-acid polypeptide reads, in one-letter code: Geranylgeranylglyceryl phosphate synthase (252 aa).

The Mg(2+) site is built by Asp-27 and Ser-56. Residues 175–181 (YLEAGSG), 206–207 (GG), and 228–229 (GT) contribute to the sn-glycerol 1-phosphate site.

The protein belongs to the GGGP/HepGP synthase family. Group II subfamily. Mg(2+) is required as a cofactor.

It localises to the cytoplasm. It catalyses the reaction sn-glycerol 1-phosphate + (2E,6E,10E)-geranylgeranyl diphosphate = sn-3-O-(geranylgeranyl)glycerol 1-phosphate + diphosphate. Its pathway is membrane lipid metabolism; glycerophospholipid metabolism. Functionally, prenyltransferase that catalyzes the transfer of the geranylgeranyl moiety of geranylgeranyl diphosphate (GGPP) to the C3 hydroxyl of sn-glycerol-1-phosphate (G1P). This reaction is the first ether-bond-formation step in the biosynthesis of archaeal membrane lipids. The protein is Geranylgeranylglyceryl phosphate synthase of Pyrococcus abyssi (strain GE5 / Orsay).